The following is a 326-amino-acid chain: Transcription initiation factor IIB (326 aa).

A TFIIB-type zinc finger spans residues 26–57 (DVEVCPECGSPRLIRDYRRGEFICQDCGLVIE). The Zn(2+) site is built by Cys30, Cys33, Cys49, and Cys52. Repeat copies occupy residues 143–226 (SELD…TREL) and 237–318 (DYIP…ELAE).

Belongs to the TFIIB family.

In terms of biological role, stabilizes TBP binding to an archaeal box-A promoter. Also responsible for recruiting RNA polymerase II to the pre-initiation complex (DNA-TBP-TFIIB). This is Transcription initiation factor IIB from Archaeoglobus fulgidus (strain ATCC 49558 / DSM 4304 / JCM 9628 / NBRC 100126 / VC-16).